The chain runs to 167 residues: Protein-export protein SecB (167 aa).

This sequence belongs to the SecB family. In terms of assembly, homotetramer, a dimer of dimers. One homotetramer interacts with 1 SecA dimer.

It localises to the cytoplasm. Its function is as follows. One of the proteins required for the normal export of preproteins out of the cell cytoplasm. It is a molecular chaperone that binds to a subset of precursor proteins, maintaining them in a translocation-competent state. It also specifically binds to its receptor SecA. The polypeptide is Protein-export protein SecB (Cellvibrio japonicus (strain Ueda107) (Pseudomonas fluorescens subsp. cellulosa)).